A 102-amino-acid chain; its full sequence is Putative pterin-4-alpha-carbinolamine dehydratase (102 aa).

This sequence belongs to the pterin-4-alpha-carbinolamine dehydratase family.

The catalysed reaction is (4aS,6R)-4a-hydroxy-L-erythro-5,6,7,8-tetrahydrobiopterin = (6R)-L-erythro-6,7-dihydrobiopterin + H2O. The chain is Putative pterin-4-alpha-carbinolamine dehydratase from Burkholderia cenocepacia (strain HI2424).